Reading from the N-terminus, the 389-residue chain is tRNA(Met) cytidine acetate ligase (389 aa).

ATP-binding positions include 8-21 (IAEF…HEYL), G97, N153, and R176.

This sequence belongs to the TmcAL family.

Its subcellular location is the cytoplasm. The enzyme catalyses cytidine(34) in elongator tRNA(Met) + acetate + ATP = N(4)-acetylcytidine(34) in elongator tRNA(Met) + AMP + diphosphate. Catalyzes the formation of N(4)-acetylcytidine (ac(4)C) at the wobble position of elongator tRNA(Met), using acetate and ATP as substrates. First activates an acetate ion to form acetyladenylate (Ac-AMP) and then transfers the acetyl group to tRNA to form ac(4)C34. This is tRNA(Met) cytidine acetate ligase from Lactococcus lactis subsp. lactis (strain IL1403) (Streptococcus lactis).